A 156-amino-acid chain; its full sequence is Small ribosomal subunit protein uS7 (156 aa).

This sequence belongs to the universal ribosomal protein uS7 family. In terms of assembly, part of the 30S ribosomal subunit. Contacts proteins S9 and S11.

Functionally, one of the primary rRNA binding proteins, it binds directly to 16S rRNA where it nucleates assembly of the head domain of the 30S subunit. Is located at the subunit interface close to the decoding center, probably blocks exit of the E-site tRNA. The polypeptide is Small ribosomal subunit protein uS7 (Mycobacteroides abscessus (strain ATCC 19977 / DSM 44196 / CCUG 20993 / CIP 104536 / JCM 13569 / NCTC 13031 / TMC 1543 / L948) (Mycobacterium abscessus)).